Consider the following 96-residue polypeptide: MDKLKIQVEVAYALPEQQKIIPLAVVEGTTAYEAVQMSGITHFFPQIELDSAKMGIFGKSIPEPKSHALREGDRVEIYRPLKIDPKQARLNRAKKG.

The protein belongs to the UPF0125 (RnfH) family.

The chain is Protein RnfH from Hahella chejuensis (strain KCTC 2396).